The sequence spans 515 residues: Bifunctional purine biosynthesis protein PurH (515 aa).

The 145-residue stretch at 1 to 145 folds into the MGS-like domain; that stretch reads MTKRALISVS…KNHASVTVVV (145 aa).

Belongs to the PurH family.

It carries out the reaction (6R)-10-formyltetrahydrofolate + 5-amino-1-(5-phospho-beta-D-ribosyl)imidazole-4-carboxamide = 5-formamido-1-(5-phospho-D-ribosyl)imidazole-4-carboxamide + (6S)-5,6,7,8-tetrahydrofolate. The enzyme catalyses IMP + H2O = 5-formamido-1-(5-phospho-D-ribosyl)imidazole-4-carboxamide. It functions in the pathway purine metabolism; IMP biosynthesis via de novo pathway; 5-formamido-1-(5-phospho-D-ribosyl)imidazole-4-carboxamide from 5-amino-1-(5-phospho-D-ribosyl)imidazole-4-carboxamide (10-formyl THF route): step 1/1. Its pathway is purine metabolism; IMP biosynthesis via de novo pathway; IMP from 5-formamido-1-(5-phospho-D-ribosyl)imidazole-4-carboxamide: step 1/1. In Streptococcus agalactiae serotype III (strain NEM316), this protein is Bifunctional purine biosynthesis protein PurH.